Here is a 273-residue protein sequence, read N- to C-terminus: Dermonecrotic toxin LdSicTox-alphaIB1aiv (273 aa).

Residue His5 is part of the active site. Mg(2+) contacts are provided by Glu25 and Asp27. The active-site Nucleophile is the His41. Disulfide bonds link Cys45-Cys51 and Cys47-Cys190. Asp85 contributes to the Mg(2+) binding site. Asn250 carries an N-linked (GlcNAc...) asparagine glycan.

The protein belongs to the arthropod phospholipase D family. Class II subfamily. Mg(2+) is required as a cofactor. As to expression, expressed by the venom gland.

The protein localises to the secreted. It catalyses the reaction an N-(acyl)-sphingosylphosphocholine = an N-(acyl)-sphingosyl-1,3-cyclic phosphate + choline. The enzyme catalyses an N-(acyl)-sphingosylphosphoethanolamine = an N-(acyl)-sphingosyl-1,3-cyclic phosphate + ethanolamine. It carries out the reaction a 1-acyl-sn-glycero-3-phosphocholine = a 1-acyl-sn-glycero-2,3-cyclic phosphate + choline. The catalysed reaction is a 1-acyl-sn-glycero-3-phosphoethanolamine = a 1-acyl-sn-glycero-2,3-cyclic phosphate + ethanolamine. Dermonecrotic toxins cleave the phosphodiester linkage between the phosphate and headgroup of certain phospholipids (sphingolipid and lysolipid substrates), forming an alcohol (often choline) and a cyclic phosphate. This toxin acts on sphingomyelin (SM). It may also act on ceramide phosphoethanolamine (CPE), lysophosphatidylcholine (LPC) and lysophosphatidylethanolamine (LPE), but not on lysophosphatidylserine (LPS), and lysophosphatidylglycerol (LPG). It acts by transphosphatidylation, releasing exclusively cyclic phosphate products as second products. Induces dermonecrosis, hemolysis, increased vascular permeability, edema, inflammatory response, and platelet aggregation. This Loxosceles deserta (Desert recluse spider) protein is Dermonecrotic toxin LdSicTox-alphaIB1aiv.